We begin with the raw amino-acid sequence, 78 residues long: MSRVCQVTGKRPMVGHKVSHANNKTKRRFLPNIQNHKFWVEEENRFVTLRLSTKGMRIIDKLGIKAVLDKIRAKGEKI.

Belongs to the bacterial ribosomal protein bL28 family.

The sequence is that of Large ribosomal subunit protein bL28 from Legionella pneumophila (strain Paris).